We begin with the raw amino-acid sequence, 131 residues long: Snaclec alboaggregin-A subunit alpha (131 aa).

Residues 1 to 131 (DCPSDWSSYD…EYPFVCKFXR (131 aa)) form the C-type lectin domain. Cystine bridges form between C2/C13, C30/C127, and C102/C119.

It belongs to the snaclec family. As to quaternary structure, heterotetramer of the subunits alpha, alpha', beta and beta'; disulfide-linked. In terms of tissue distribution, expressed by the venom gland.

The protein resides in the secreted. Potent platelet activator that aggregates platelets via both GPIbalpha (GP1BA) and GPVI (GP6). Induces a tyrosine phosphorylation profile in platelets that resembles this produced by collagen, involving the time dependent tyrosine phosphorylation of Fc receptor gamma chain (FCGR1A), phospholipase Cgamma2 (PLCG2), and LAT. The protein is Snaclec alboaggregin-A subunit alpha of Trimeresurus albolabris (White-lipped pit viper).